Here is a 74-residue protein sequence, read N- to C-terminus: Sec-independent protein translocase protein TatA (74 aa).

The chain crosses the membrane as a helical span at residues 1-21 (MGSIGMTELLLIFGIIVLLFG).

The protein belongs to the TatA/E family. In terms of assembly, forms a complex with TatC.

The protein resides in the cell inner membrane. Functionally, part of the twin-arginine translocation (Tat) system that transports large folded proteins containing a characteristic twin-arginine motif in their signal peptide across membranes. TatA could form the protein-conducting channel of the Tat system. This Sulfurihydrogenibium sp. (strain YO3AOP1) protein is Sec-independent protein translocase protein TatA.